A 340-amino-acid polypeptide reads, in one-letter code: Phosphoribosylformylglycinamidine cyclo-ligase (340 aa).

Belongs to the AIR synthase family.

The protein resides in the cytoplasm. It catalyses the reaction 2-formamido-N(1)-(5-O-phospho-beta-D-ribosyl)acetamidine + ATP = 5-amino-1-(5-phospho-beta-D-ribosyl)imidazole + ADP + phosphate + H(+). It functions in the pathway purine metabolism; IMP biosynthesis via de novo pathway; 5-amino-1-(5-phospho-D-ribosyl)imidazole from N(2)-formyl-N(1)-(5-phospho-D-ribosyl)glycinamide: step 2/2. The chain is Phosphoribosylformylglycinamidine cyclo-ligase from Streptococcus pneumoniae (strain Taiwan19F-14).